The chain runs to 457 residues: uncharacterized protein (457 aa).

The next 2 membrane-spanning stretches (helical) occupy residues M1–L21 and I250–F270.

It is found in the membrane. This is an uncharacterized protein from Saccharomyces cerevisiae (strain ATCC 204508 / S288c) (Baker's yeast).